A 337-amino-acid polypeptide reads, in one-letter code: Probable dihydroorotase (337 aa).

Positions 12, 14, 95, 132, 170, and 240 each coordinate Zn(2+). N6-carboxylysine is present on K95.

This sequence belongs to the metallo-dependent hydrolases superfamily. DHOase family. Class II DHOase subfamily. Zn(2+) serves as cofactor.

The catalysed reaction is (S)-dihydroorotate + H2O = N-carbamoyl-L-aspartate + H(+). It participates in pyrimidine metabolism; UMP biosynthesis via de novo pathway; (S)-dihydroorotate from bicarbonate: step 3/3. In Schizosaccharomyces pombe (strain 972 / ATCC 24843) (Fission yeast), this protein is Probable dihydroorotase (ura2).